The primary structure comprises 550 residues: Methionine--tRNA ligase (550 aa).

Residues 13–23 (PYANGPLHFGH) carry the 'HIGH' region motif. 4 residues coordinate Zn(2+): Cys145, Cys148, Cys158, and Cys161. The short motif at 331-335 (QFSKS) is the 'KMSKS' region element. Lys334 serves as a coordination point for ATP.

It belongs to the class-I aminoacyl-tRNA synthetase family. MetG type 1 subfamily. As to quaternary structure, monomer. The cofactor is Zn(2+).

The protein localises to the cytoplasm. It carries out the reaction tRNA(Met) + L-methionine + ATP = L-methionyl-tRNA(Met) + AMP + diphosphate. Functionally, is required not only for elongation of protein synthesis but also for the initiation of all mRNA translation through initiator tRNA(fMet) aminoacylation. This is Methionine--tRNA ligase (metG) from Chlamydia trachomatis serovar D (strain ATCC VR-885 / DSM 19411 / UW-3/Cx).